Reading from the N-terminus, the 78-residue chain is Chassatide C4 (78 aa).

Positions 1–23 (MAKFATQLFLLTASVVMLEVQSS) are cleaved as a signal peptide. A propeptide spans 24-42 (IVIMQDPDLGRKLIMNPAN) (removed in mature form). A cross-link (cyclopeptide (Gly-Asn)) is located at residues 43 to 71 (GASCGETCFTGICFTAGCSCNPWPTCTRN). Disulfide bonds link Cys46–Cys60, Cys50–Cys62, and Cys55–Cys68. Positions 72–78 (GLNPESI) are cleaved as a propeptide — removed in mature form.

This is a cyclic peptide.

Its function is as follows. Probably participates in a plant defense mechanism. This Chassalia chartacea (Chassalia curviflora) protein is Chassatide C4.